We begin with the raw amino-acid sequence, 680 residues long: Methionine--tRNA ligase (680 aa).

The short motif at 15–25 is the 'HIGH' region element; that stretch reads PYANGSIHLGH. The Zn(2+) site is built by C146, C149, C159, and C162. Positions 332 to 336 match the 'KMSKS' region motif; it reads KMSKS. K335 is an ATP binding site. Positions 579–680 constitute a tRNA-binding domain; that stretch reads DFAKVDMRIA…EGAQPGMRVM (102 aa).

The protein belongs to the class-I aminoacyl-tRNA synthetase family. MetG type 1 subfamily. Homodimer. Zn(2+) serves as cofactor.

The protein resides in the cytoplasm. The catalysed reaction is tRNA(Met) + L-methionine + ATP = L-methionyl-tRNA(Met) + AMP + diphosphate. Is required not only for elongation of protein synthesis but also for the initiation of all mRNA translation through initiator tRNA(fMet) aminoacylation. The polypeptide is Methionine--tRNA ligase (Photobacterium profundum (strain SS9)).